The primary structure comprises 523 residues: Calcium uptake protein 3, mitochondrial (523 aa).

The N-terminal 6 residues, 1–6, are a transit peptide targeting the mitochondrion; the sequence is MAALRR. Positions 226 to 261 constitute an EF-hand 1 domain; that stretch reads PHAGFRIAFNMFDTDGNEMVDKKEFLVLQEIFRKKN. Residues Asp-238, Asp-240, Asn-242, Met-244, Asp-246, and Glu-249 each contribute to the Ca(2+) site. The 36-residue stretch at 395-430 folds into the EF-hand 2; degenerate domain; that stretch reads ENTSVFLENVRYSISEEKGITFDEFRSFFQFLNNLE. Positions 464–499 constitute an EF-hand 3 domain; sequence SPHLVNTVFKIFDVDKDDQLSYKEFIGIMKDRLHRG. Ca(2+) is bound by residues Asp-476, Asp-478, Asp-480, Gln-482, and Glu-487.

This sequence belongs to the MICU1 family. MICU3 subfamily. Heterodimer; disulfide-linked; heterodimerizes with MICU1. Heterodimerizes with isoform 3 of MICU1 (MICU1.1) in skeletal muscle. Component of the uniplex complex, composed of MCU, EMRE/SMDT1, MICU1 and MICU3 in a 4:4:1:1 stoichiometry. In terms of tissue distribution, predominantly expressed in skeletal muscle and central nervous system.

It localises to the mitochondrion intermembrane space. Its subcellular location is the mitochondrion inner membrane. Its function is as follows. Tissue-specific calcium sensor of the mitochondrial calcium uniporter (MCU) channel, which specifically regulates MCU channel activity in the central nervous system and skeletal muscle. Senses calcium level via its EF-hand domains: compared to MICU1 and MICU2, MICU3 has a higher affinity for calcium. MICU1 and MICU3 form a disulfide-linked heterodimer that stimulates and inhibits MCU activity, depending on the concentration of calcium. At low calcium levels, MICU1 occludes the pore of the MCU channel, preventing mitochondrial calcium uptake. At higher calcium levels, calcium-binding to MICU1 and MICU3 induces a conformational change that weakens MCU-MICU1 interactions and moves the MICU1-MICU3 heterodimer away from the pore, allowing calcium permeation through the MCU channel. The high calcium affinity of MICU3 lowers the calcium threshold necessary for calcium permeation through the MCU channel. The MICU1-MICU3 heterodimer promotes flexibility of neurotransmission in neuronal cells by enhancing mitochondrial calcium uptake in presynapses. It is also required to increase mitochondrial calcium uptake in skeletal muscle cells, thereby increasing ATP production. In Mus musculus (Mouse), this protein is Calcium uptake protein 3, mitochondrial.